The following is a 408-amino-acid chain: Endo-1,4-beta-xylanase A (408 aa).

The first 19 residues, 1-19 (MKLSASFAALALLLPFVQA), serve as a signal peptide directing secretion. Residues 20–55 (QSPVWGQCGGIGWTGPTTCTAGNVCQEYSAYYSQCI) form the CBM1 domain. The interval 64-89 (TSVSTAPNPPPTSHTSTSSAPSGAST) is disordered. The segment covering 76–89 (SHTSTSSAPSGAST) has biased composition (low complexity). Residues 88 to 405 (STSTAKLNTL…KPAYDGIAIG (318 aa)) form the GH10 domain. Glu-222 serves as the catalytic Proton donor. Glu-327 acts as the Nucleophile in catalysis. Cys-355 and Cys-361 are oxidised to a cystine.

It belongs to the glycosyl hydrolase 10 (cellulase F) family.

The protein resides in the secreted. It catalyses the reaction Endohydrolysis of (1-&gt;4)-beta-D-xylosidic linkages in xylans.. It participates in glycan degradation; xylan degradation. Functionally, endo-1,4-beta-xylanase involved in the hydrolysis of xylan, a major structural heterogeneous polysaccharide found in plant biomass representing the second most abundant polysaccharide in the biosphere, after cellulose. The protein is Endo-1,4-beta-xylanase A (xynA) of Phanerodontia chrysosporium (White-rot fungus).